The sequence spans 424 residues: Pachytene checkpoint protein 2 homolog (424 aa).

Residue 171 to 178 coordinates ATP; the sequence is GPPGTGKT.

This sequence belongs to the AAA ATPase family. PCH2 subfamily.

Functionally, plays a key role in chromosome recombination and chromosome structure development during meiosis. Required at early steps in meiotic recombination that leads to non-crossovers pathways. Also needed for efficient completion of homologous synapsis by influencing crossover distribution along the chromosomes affecting both crossovers and non-crossovers pathways. The polypeptide is Pachytene checkpoint protein 2 homolog (trip13) (Danio rerio (Zebrafish)).